The primary structure comprises 450 residues: tRNA-2-methylthio-N(6)-dimethylallyladenosine synthase (450 aa).

In terms of domain architecture, MTTase N-terminal spans 7-127 (KKVFIKTYGC…LPDVLARVRG (121 aa)). The [4Fe-4S] cluster site is built by cysteine 16, cysteine 52, cysteine 90, cysteine 168, cysteine 172, and cysteine 175. A Radical SAM core domain is found at 154–388 (IKRGVTAFLT…LLLKQQQGFG (235 aa)). The 62-residue stretch at 389-450 (SSLVGSTIDT…GYNSLFAELA (62 aa)) folds into the TRAM domain.

The protein belongs to the methylthiotransferase family. MiaB subfamily. Monomer. [4Fe-4S] cluster is required as a cofactor.

It is found in the cytoplasm. The catalysed reaction is N(6)-dimethylallyladenosine(37) in tRNA + (sulfur carrier)-SH + AH2 + 2 S-adenosyl-L-methionine = 2-methylsulfanyl-N(6)-dimethylallyladenosine(37) in tRNA + (sulfur carrier)-H + 5'-deoxyadenosine + L-methionine + A + S-adenosyl-L-homocysteine + 2 H(+). In terms of biological role, catalyzes the methylthiolation of N6-(dimethylallyl)adenosine (i(6)A), leading to the formation of 2-methylthio-N6-(dimethylallyl)adenosine (ms(2)i(6)A) at position 37 in tRNAs that read codons beginning with uridine. The sequence is that of tRNA-2-methylthio-N(6)-dimethylallyladenosine synthase from Mesorhizobium japonicum (strain LMG 29417 / CECT 9101 / MAFF 303099) (Mesorhizobium loti (strain MAFF 303099)).